Here is a 262-residue protein sequence, read N- to C-terminus: Hydroxyethylthiazole kinase (262 aa).

M50 lines the substrate pocket. 2 residues coordinate ATP: R125 and T171. G198 lines the substrate pocket.

The protein belongs to the Thz kinase family. Requires Mg(2+) as cofactor.

It carries out the reaction 5-(2-hydroxyethyl)-4-methylthiazole + ATP = 4-methyl-5-(2-phosphooxyethyl)-thiazole + ADP + H(+). Its pathway is cofactor biosynthesis; thiamine diphosphate biosynthesis; 4-methyl-5-(2-phosphoethyl)-thiazole from 5-(2-hydroxyethyl)-4-methylthiazole: step 1/1. Functionally, catalyzes the phosphorylation of the hydroxyl group of 4-methyl-5-beta-hydroxyethylthiazole (THZ). In Shigella boydii serotype 4 (strain Sb227), this protein is Hydroxyethylthiazole kinase.